The primary structure comprises 196 residues: uncharacterized protein (196 aa).

In terms of domain architecture, HTH tetR-type spans 7–67 (RNTKEKILTA…AVIDNHVKIW (61 aa)). Residues 30 to 49 (SINDILDETATGKGQFYYYF) constitute a DNA-binding region (H-T-H motif).

This is an uncharacterized protein from Lactococcus lactis subsp. lactis (Streptococcus lactis).